Here is a 367-residue protein sequence, read N- to C-terminus: Pepsin A (367 aa).

The propeptide at 1–42 (SIHRVPLKKGKSLRKQLKDHGLLEDFLKKHPYNPASKYHPVL) is activation peptide. The region spanning 59 to 364 (YYGTISIGTP…DRANNKVGLS (306 aa)) is the Peptidase A1 domain. The active site involves aspartate 77. A disulfide bridge links cysteine 90 with cysteine 95. Asparagine 113 carries N-linked (GlcNAc...) asparagine glycosylation. A disulfide bridge connects residues cysteine 251 and cysteine 255. The active site involves aspartate 260. Cysteines 290 and 323 form a disulfide.

The protein belongs to the peptidase A1 family.

It catalyses the reaction Preferential cleavage: hydrophobic, preferably aromatic, residues in P1 and P1' positions. Cleaves 1-Phe-|-Val-2, 4-Gln-|-His-5, 13-Glu-|-Ala-14, 14-Ala-|-Leu-15, 15-Leu-|-Tyr-16, 16-Tyr-|-Leu-17, 23-Gly-|-Phe-24, 24-Phe-|-Phe-25 and 25-Phe-|-Tyr-26 bonds in the B chain of insulin.. In terms of biological role, shows particularly broad specificity; although bonds involving phenylalanine and leucine are preferred, many others are also cleaved to some extent. The protein is Pepsin A (PGA) of Gallus gallus (Chicken).